Consider the following 340-residue polypeptide: MSSAAVVHHDDLMEPTLQSIINQKTLRWIFVGGKGGVGKTTTSCSLAIQLAKARKSVLLISTDPAHNLSDAFGQKFGKEARLVDGYSNLSAMEIDPNGSIQDLLASGEAQGEDPMAGLGMGNMMQDLAFSIPGVDEAMSFAEVLKQVKSLSYEVIVFDTAPTGHTLRFLQFPTVLEKALAKLSQLSSQFGPMLNSILGARGGLPGGQNIDELLQKMESLRETISEVNTQFKNPDMTTFVCVCIAEFLSLYETERMIQELTSYSIDTHAIVVNQLLFPKKGSECEQCNARRKMQQKYLEQIEELYEDFNVVRMPLLVEEVRGKEKLEKFSEMLVHPYVPPQ.

Position 34-41 (34-41 (KGGVGKTT)) interacts with ATP. D63 is a catalytic residue. Residues E245 and N272 each contribute to the ATP site. C283 and C286 together coordinate Zn(2+).

This sequence belongs to the arsA ATPase family. Homodimer.

Its subcellular location is the cytoplasm. It is found in the endoplasmic reticulum. ATPase required for the post-translational delivery of tail-anchored (TA) proteins to the endoplasmic reticulum. Recognizes and selectively binds the transmembrane domain of TA proteins in the cytosol. This complex then targets to the endoplasmic reticulum by membrane-bound receptors, where the tail-anchored protein is released for insertion. This process is regulated by ATP binding and hydrolysis. ATP binding drives the homodimer towards the closed dimer state, facilitating recognition of newly synthesized TA membrane proteins. ATP hydrolysis is required for insertion. Subsequently, the homodimer reverts towards the open dimer state, lowering its affinity for the membrane-bound receptor, and returning it to the cytosol to initiate a new round of targeting. In Aspergillus clavatus (strain ATCC 1007 / CBS 513.65 / DSM 816 / NCTC 3887 / NRRL 1 / QM 1276 / 107), this protein is ATPase get3 (get3).